The following is a 24-amino-acid chain: Citropin-3.1.2 (24 aa).

Expressed by the dorsal and submental skin glands.

The protein resides in the secreted. This chain is Citropin-3.1.2, found in Ranoidea citropa (Australian Blue Mountains tree frog).